The primary structure comprises 560 residues: Glutamate--tRNA ligase (560 aa).

The short motif at 108 to 118 (PNPSGPLHLGH) is the 'HIGH' region element.

The protein belongs to the class-I aminoacyl-tRNA synthetase family. Glutamate--tRNA ligase type 2 subfamily.

It localises to the cytoplasm. The catalysed reaction is tRNA(Glu) + L-glutamate + ATP = L-glutamyl-tRNA(Glu) + AMP + diphosphate. Catalyzes the attachment of glutamate to tRNA(Glu) in a two-step reaction: glutamate is first activated by ATP to form Glu-AMP and then transferred to the acceptor end of tRNA(Glu). The protein is Glutamate--tRNA ligase of Methanocorpusculum labreanum (strain ATCC 43576 / DSM 4855 / Z).